We begin with the raw amino-acid sequence, 910 residues long: Protein translocase subunit SecA (910 aa).

ATP contacts are provided by residues glutamine 86, 104–108 (GEGKT), and aspartate 499. Zn(2+) is bound by residues cysteine 894, cysteine 896, cysteine 905, and histidine 906.

The protein belongs to the SecA family. Monomer and homodimer. Part of the essential Sec protein translocation apparatus which comprises SecA, SecYEG and auxiliary proteins SecDF-YajC and YidC. Requires Zn(2+) as cofactor.

Its subcellular location is the cell inner membrane. It is found in the cytoplasm. The enzyme catalyses ATP + H2O + cellular proteinSide 1 = ADP + phosphate + cellular proteinSide 2.. Functionally, part of the Sec protein translocase complex. Interacts with the SecYEG preprotein conducting channel. Has a central role in coupling the hydrolysis of ATP to the transfer of proteins into and across the cell membrane, serving both as a receptor for the preprotein-SecB complex and as an ATP-driven molecular motor driving the stepwise translocation of polypeptide chains across the membrane. The protein is Protein translocase subunit SecA of Rickettsia bellii (strain RML369-C).